A 416-amino-acid polypeptide reads, in one-letter code: NADH-quinone oxidoreductase subunit D (416 aa).

The protein belongs to the complex I 49 kDa subunit family. As to quaternary structure, NDH-1 is composed of 14 different subunits. Subunits NuoB, C, D, E, F, and G constitute the peripheral sector of the complex.

It localises to the cell inner membrane. The enzyme catalyses a quinone + NADH + 5 H(+)(in) = a quinol + NAD(+) + 4 H(+)(out). Functionally, NDH-1 shuttles electrons from NADH, via FMN and iron-sulfur (Fe-S) centers, to quinones in the respiratory chain. The immediate electron acceptor for the enzyme in this species is believed to be ubiquinone. Couples the redox reaction to proton translocation (for every two electrons transferred, four hydrogen ions are translocated across the cytoplasmic membrane), and thus conserves the redox energy in a proton gradient. The protein is NADH-quinone oxidoreductase subunit D of Caulobacter sp. (strain K31).